Here is a 128-residue protein sequence, read N- to C-terminus: Large ribosomal subunit protein uL22 (128 aa).

The protein belongs to the universal ribosomal protein uL22 family. In terms of assembly, part of the 50S ribosomal subunit.

This protein binds specifically to 23S rRNA; its binding is stimulated by other ribosomal proteins, e.g. L4, L17, and L20. It is important during the early stages of 50S assembly. It makes multiple contacts with different domains of the 23S rRNA in the assembled 50S subunit and ribosome. Its function is as follows. The globular domain of the protein is located near the polypeptide exit tunnel on the outside of the subunit, while an extended beta-hairpin is found that lines the wall of the exit tunnel in the center of the 70S ribosome. The sequence is that of Large ribosomal subunit protein uL22 from Prochlorococcus marinus (strain MIT 9312).